The sequence spans 186 residues: dCTP deaminase, dUMP-forming (186 aa).

DCTP-binding positions include 101–106 (RSSLGR), aspartate 119, 127–129 (TLE), glutamine 148, tyrosine 162, and glutamine 171. Glutamate 129 (proton donor/acceptor) is an active-site residue.

Belongs to the dCTP deaminase family. Homotrimer.

It catalyses the reaction dCTP + 2 H2O = dUMP + NH4(+) + diphosphate. It functions in the pathway pyrimidine metabolism; dUMP biosynthesis; dUMP from dCTP: step 1/1. Its function is as follows. Bifunctional enzyme that catalyzes both the deamination of dCTP to dUTP and the hydrolysis of dUTP to dUMP without releasing the toxic dUTP intermediate. The polypeptide is dCTP deaminase, dUMP-forming (Coprothermobacter proteolyticus (strain ATCC 35245 / DSM 5265 / OCM 4 / BT)).